The sequence spans 934 residues: Isoleucine--tRNA ligase (934 aa).

The 'HIGH' region signature appears at 58–68 (PYANGEIHIGH). Glu559 is an L-isoleucyl-5'-AMP binding site. The 'KMSKS' region motif lies at 600–604 (KMSKS). Lys603 contacts ATP. Zn(2+) is bound by residues Cys897, Cys900, Cys917, and Cys920.

The protein belongs to the class-I aminoacyl-tRNA synthetase family. IleS type 1 subfamily. As to quaternary structure, monomer. The cofactor is Zn(2+).

The protein localises to the cytoplasm. It catalyses the reaction tRNA(Ile) + L-isoleucine + ATP = L-isoleucyl-tRNA(Ile) + AMP + diphosphate. In terms of biological role, catalyzes the attachment of isoleucine to tRNA(Ile). As IleRS can inadvertently accommodate and process structurally similar amino acids such as valine, to avoid such errors it has two additional distinct tRNA(Ile)-dependent editing activities. One activity is designated as 'pretransfer' editing and involves the hydrolysis of activated Val-AMP. The other activity is designated 'posttransfer' editing and involves deacylation of mischarged Val-tRNA(Ile). This Teredinibacter turnerae (strain ATCC 39867 / T7901) protein is Isoleucine--tRNA ligase.